Here is a 102-residue protein sequence, read N- to C-terminus: Protamine-2 (102 aa).

Residues 1–102 (MVRYRMRSLS…RTRRRRCRRH (102 aa)) form a disordered region. Phosphoserine is present on residues serine 8 and serine 10. The span at 8 to 17 (SLSERSHEVH) shows a compositional bias: basic and acidic residues. A compositionally biased stretch (low complexity) spans 18-29 (GQQVHGQDQGHN). Over residues 39–48 (EHVEVYERTH) the composition is skewed to basic and acidic residues. The span at 49 to 102 (GHSHYRRRHCSRRRLHRIHRRRHRSCRRRRRRSCRHRRRHRRGCRTRRRRCRRH) shows a compositional bias: basic residues.

It belongs to the protamine P2 family. Interacts with TDRP. Proteolytic processing into mature chains is required for histone eviction during spermatogenesis. Transition proteins (TNP1 and TNP2) are required for processing. Testis.

Its subcellular location is the nucleus. It localises to the chromosome. In terms of biological role, protamines substitute for histones in the chromatin of sperm during the haploid phase of spermatogenesis. They compact sperm DNA into a highly condensed, stable and inactive complex. The chain is Protamine-2 (PRM2) from Macaca mulatta (Rhesus macaque).